Here is a 168-residue protein sequence, read N- to C-terminus: Small ribosomal subunit protein uS9 (168 aa).

The segment at 1-38 (MAKIADSIDSAQADSVENVESYSTETPESAAPAAPRPV) is disordered. Polar residues predominate over residues 9-22 (DSAQADSVENVESY). The segment covering 23-37 (STETPESAAPAAPRP) has biased composition (low complexity).

The protein belongs to the universal ribosomal protein uS9 family.

The sequence is that of Small ribosomal subunit protein uS9 from Leifsonia xyli subsp. xyli (strain CTCB07).